The sequence spans 44 residues: Thymosin beta-4 (44 aa).

2 stretches are compositionally biased toward basic and acidic residues: residues 1-25 and 33-44; these read MSDK…ETQE and ETIEQEKQTSES. Residues 1 to 44 are disordered; it reads MSDKPDMAEIEKFDKAKLKKTETQEKNPLPSKETIEQEKQTSES. Serine 2 bears the N-acetylserine mark.

This sequence belongs to the thymosin beta family. Spleen, kidney, heart, and oocytes.

It localises to the cytoplasm. Its subcellular location is the cytoskeleton. Its function is as follows. Plays an important role in the organization of the cytoskeleton. Binds to and sequesters actin monomers (G actin) and therefore inhibits actin polymerization. The polypeptide is Thymosin beta-4 (tmsb4) (Xenopus laevis (African clawed frog)).